Reading from the N-terminus, the 72-residue chain is Cytochrome c oxidase subunit 2 (72 aa).

At 1–14 the chain is on the mitochondrial intermembrane side; the sequence is MAHPSQLGFQDAAS. Residues 15-45 traverse the membrane as a helical segment; that stretch reads PVMEELLHFHDHALMIVFLISTLVLYIIVAM. At 46–72 the chain is on the mitochondrial matrix side; that stretch reads VSTKLTNKYXLDSQEIEVIWTXLPAVI.

Belongs to the cytochrome c oxidase subunit 2 family. In terms of assembly, component of the cytochrome c oxidase (complex IV, CIV), a multisubunit enzyme composed of 14 subunits. The complex is composed of a catalytic core of 3 subunits MT-CO1, MT-CO2 and MT-CO3, encoded in the mitochondrial DNA, and 11 supernumerary subunits COX4I, COX5A, COX5B, COX6A, COX6B, COX6C, COX7A, COX7B, COX7C, COX8 and NDUFA4, which are encoded in the nuclear genome. The complex exists as a monomer or a dimer and forms supercomplexes (SCs) in the inner mitochondrial membrane with NADH-ubiquinone oxidoreductase (complex I, CI) and ubiquinol-cytochrome c oxidoreductase (cytochrome b-c1 complex, complex III, CIII), resulting in different assemblies (supercomplex SCI(1)III(2)IV(1) and megacomplex MCI(2)III(2)IV(2)). Found in a complex with TMEM177, COA6, COX18, COX20, SCO1 and SCO2. Interacts with TMEM177 in a COX20-dependent manner. Interacts with COX20. Interacts with COX16. Requires Cu cation as cofactor.

The protein resides in the mitochondrion inner membrane. The enzyme catalyses 4 Fe(II)-[cytochrome c] + O2 + 8 H(+)(in) = 4 Fe(III)-[cytochrome c] + 2 H2O + 4 H(+)(out). Component of the cytochrome c oxidase, the last enzyme in the mitochondrial electron transport chain which drives oxidative phosphorylation. The respiratory chain contains 3 multisubunit complexes succinate dehydrogenase (complex II, CII), ubiquinol-cytochrome c oxidoreductase (cytochrome b-c1 complex, complex III, CIII) and cytochrome c oxidase (complex IV, CIV), that cooperate to transfer electrons derived from NADH and succinate to molecular oxygen, creating an electrochemical gradient over the inner membrane that drives transmembrane transport and the ATP synthase. Cytochrome c oxidase is the component of the respiratory chain that catalyzes the reduction of oxygen to water. Electrons originating from reduced cytochrome c in the intermembrane space (IMS) are transferred via the dinuclear copper A center (CU(A)) of subunit 2 and heme A of subunit 1 to the active site in subunit 1, a binuclear center (BNC) formed by heme A3 and copper B (CU(B)). The BNC reduces molecular oxygen to 2 water molecules using 4 electrons from cytochrome c in the IMS and 4 protons from the mitochondrial matrix. The polypeptide is Cytochrome c oxidase subunit 2 (mt-co2) (Gomphosus varius (Bird wrasse)).